A 427-amino-acid chain; its full sequence is MSSIVVVGTQWGDEGKGKITDFLAEQADVIARFSGGNNAGHTIQFGGETYKLHLVPSGIFYKDKLAVIGNGVVVDPVALLKELDGLNERGISTDNLRISNRAQVILPYHLAQDEYEERRRGDNKIGTTKKGIGPAYVDKAQRIGIRMADLLEKETFERRLKENIEYKNACFKGMFNETCPTFDEIFDEYYAAGQRLKDYVTDTAKILDDANVADEKVLFEGAQGVMLDIDHGTYPFVTSSNPVAGNVTVGTGVGPTSVSKVIGVCKSYTSRVGDGPFPTELFDEDGHHIREVGREYGTTTGRPRRVGWFDSVVLRHSRRVSGITDLSINSIDVLTGLDTVKICTAYELDGEKITEYPANLDQLRRCKPIFEELPGWTEDITGCRSLDELPENARNYLERISELCGVHISIFSVGPDREQTNLLEQLW.

GTP is bound by residues 12–18 (GDEGKGK) and 40–42 (GHT). Catalysis depends on D13, which acts as the Proton acceptor. Residues D13 and G40 each contribute to the Mg(2+) site. IMP is bound by residues 13–16 (DEGK), 38–41 (NAGH), T128, R142, Q223, T238, and R302. H41 serves as the catalytic Proton donor. Residue 298–304 (TTTGRPR) coordinates substrate. Residues R304, 330–332 (SID), and 412–414 (SVG) contribute to the GTP site.

This sequence belongs to the adenylosuccinate synthetase family. In terms of assembly, homodimer. It depends on Mg(2+) as a cofactor.

The protein localises to the cytoplasm. The enzyme catalyses IMP + L-aspartate + GTP = N(6)-(1,2-dicarboxyethyl)-AMP + GDP + phosphate + 2 H(+). The protein operates within purine metabolism; AMP biosynthesis via de novo pathway; AMP from IMP: step 1/2. Its function is as follows. Plays an important role in the de novo pathway of purine nucleotide biosynthesis. Catalyzes the first committed step in the biosynthesis of AMP from IMP. The chain is Adenylosuccinate synthetase from Staphylococcus epidermidis (strain ATCC 12228 / FDA PCI 1200).